The following is a 198-amino-acid chain: Carnitine operon protein CaiE (198 aa).

The tract at residues 179–198 (VEENRPRLKGTTDVKPKSAQ) is disordered. Residues 180 to 198 (EENRPRLKGTTDVKPKSAQ) show a composition bias toward basic and acidic residues.

The protein belongs to the transferase hexapeptide repeat family.

The protein operates within amine and polyamine metabolism; carnitine metabolism. Functionally, overproduction of CaiE stimulates the activity of CaiB and CaiD. This Salmonella typhi protein is Carnitine operon protein CaiE.